A 273-amino-acid polypeptide reads, in one-letter code: MATYQPYNEYSSVTGGGFENSESRPGSGESETNTRVNTLTPVTIKQILESKQDIQDGPFVSHNQELHHVCFVGVVRNITDHTANIFLTIEDGTGQIEVRKWSEDANDLAAGNDDSSGKGYGSQVAQQFEIGGYVKVFGALKEFGGKKNIQYAVIKPIDSFNEVLTHHLEVIKCHSIASGMMKQPLESASNNNGQSLFVKDDNDTSSGSSPLQRILEFCKKQCEGKDANSFAVPIPLISQSLNLDETTVRNCCTTLTDQGFIYPTFDDNNFFAL.

Residues 1–13 show a composition bias toward polar residues; sequence MATYQPYNEYSSV. The segment at 1–38 is disordered; it reads MATYQPYNEYSSVTGGGFENSESRPGSGESETNTRVNT. S27 bears the Phosphoserine mark. The span at 29-38 shows a compositional bias: polar residues; the sequence is ESETNTRVNT. Positions 69-157 form a DNA-binding region, OB; sequence VCFVGVVRNI…NIQYAVIKPI (89 aa). S122 is modified (phosphoserine).

The protein belongs to the replication factor A protein 2 family. In terms of assembly, heterotrimer of 69, 36, and 13 kDa chains. The DNA-binding activity may reside exclusively on the 69 kDa subunit. Interacts with MCM10. In terms of processing, phosphorylated in a cell cycle-dependent manner with phosphorylation increasing at the entry in S phase and dephosphorylation occurring at mitosis. The N-terminus is blocked.

Its subcellular location is the nucleus. Its function is as follows. Binds to single-stranded sequences participating in DNA replication in addition to those mediating transcriptional repression (URS1) and activation (CAR1). Stimulates the activity of a cognate strand exchange protein (SEP1). It cooperates with T-AG and DNA topoisomerase I to unwind template DNA containing the simian virus 40 origin of DNA replication. The protein is Replication factor A protein 2 (RFA2) of Saccharomyces cerevisiae (strain ATCC 204508 / S288c) (Baker's yeast).